A 261-amino-acid chain; its full sequence is Ribosomal RNA small subunit methyltransferase J (261 aa).

Residues 109–110 (RD), 125–126 (ER), and aspartate 179 each bind S-adenosyl-L-methionine.

This sequence belongs to the methyltransferase superfamily. RsmJ family.

It localises to the cytoplasm. The catalysed reaction is guanosine(1516) in 16S rRNA + S-adenosyl-L-methionine = N(2)-methylguanosine(1516) in 16S rRNA + S-adenosyl-L-homocysteine + H(+). Functionally, specifically methylates the guanosine in position 1516 of 16S rRNA. The protein is Ribosomal RNA small subunit methyltransferase J of Pseudomonas aeruginosa (strain ATCC 15692 / DSM 22644 / CIP 104116 / JCM 14847 / LMG 12228 / 1C / PRS 101 / PAO1).